Reading from the N-terminus, the 186-residue chain is Transcription factor HES-3 (186 aa).

A bHLH domain is found at 1 to 49 (MEKKRRARINVSLEQLKSLLEKHYSHQIRKRKLEKADILELSVKYMRSL). The Orange domain maps to 65–99 (QPSGFRSCLPGVSQLLRRGDEVGSGLRCPLVPESA). A disordered region spans residues 128-186 (APAAGGPRSPPPLLLLPESLPGSSASVPPPQPASSRCAESPGLGLRVWRPWGSPGDDLN). Over residues 142–153 (LLPESLPGSSAS) the composition is skewed to low complexity. The short motif at 175–178 (WRPW) is the WRPW motif element.

As to quaternary structure, transcription repression requires formation of a complex with a corepressor protein of the Groucho/TLE family.

Its subcellular location is the nucleus. Functionally, transcriptional repressor of genes that require a bHLH protein for their transcription. The polypeptide is Transcription factor HES-3 (HES3) (Homo sapiens (Human)).